Reading from the N-terminus, the 718-residue chain is 1-deoxy-D-xylulose-5-phosphate synthase 1, chloroplastic (718 aa).

The transit peptide at 1–55 (MAFCALSFPAHISRATTPAPSDLQKSSSFSSRFYWGADLLRPSQYKVRKIQSGVY) directs the protein to the chloroplast. Thiamine diphosphate contacts are provided by residues H143 and 184-186 (GHS). D215 contacts Mg(2+). Thiamine diphosphate-binding positions include 216-217 (GA), N244, Y365, and E447. N244 is a Mg(2+) binding site.

Belongs to the transketolase family. DXPS subfamily. In terms of assembly, homodimer. Mg(2+) is required as a cofactor. Requires thiamine diphosphate as cofactor. Expressed in trichomes, leaves, flowers, roots and stems.

The protein localises to the plastid. The protein resides in the chloroplast. The enzyme catalyses D-glyceraldehyde 3-phosphate + pyruvate + H(+) = 1-deoxy-D-xylulose 5-phosphate + CO2. It functions in the pathway metabolic intermediate biosynthesis; 1-deoxy-D-xylulose 5-phosphate biosynthesis; 1-deoxy-D-xylulose 5-phosphate from D-glyceraldehyde 3-phosphate and pyruvate: step 1/1. Functionally, catalyzes the acyloin condensation reaction between C atoms 2 and 3 of pyruvate and glyceraldehyde 3-phosphate to yield 1-deoxy-D-xylulose-5-phosphate (DXP). This Cannabis sativa (Hemp) protein is 1-deoxy-D-xylulose-5-phosphate synthase 1, chloroplastic.